The chain runs to 61 residues: Large ribosomal subunit protein eL37 (61 aa).

Zn(2+) contacts are provided by C19, C22, C34, and C37. The segment at 19–37 (CRRCGRNAYNVSKHYCAAC) adopts a C4-type zinc-finger fold.

The protein belongs to the eukaryotic ribosomal protein eL37 family. Zn(2+) is required as a cofactor.

Functionally, binds to the 23S rRNA. The polypeptide is Large ribosomal subunit protein eL37 (rpl37e) (Saccharolobus solfataricus (strain ATCC 35092 / DSM 1617 / JCM 11322 / P2) (Sulfolobus solfataricus)).